A 223-amino-acid polypeptide reads, in one-letter code: Probable Ras-related protein Rab-4A (223 aa).

16–23 (GNAGTGKT) provides a ligand contact to GTP. Positions 38 to 46 (TQHTIGAEF) match the Effector region motif. GTP is bound by residues 64–68 (DTAGQ) and 122–125 (NKKD). S-geranylgeranyl cysteine attachment occurs at residues Cys-221 and Cys-223. Position 223 is a cysteine methyl ester (Cys-223).

It belongs to the small GTPase superfamily. Rab family.

The protein resides in the cell membrane. In terms of biological role, protein transport. Probably involved in vesicular traffic. The polypeptide is Probable Ras-related protein Rab-4A (Echinococcus multilocularis (Fox tapeworm)).